The primary structure comprises 387 residues: O-methyltransferase lepI (387 aa).

135–148 is a substrate binding site; sequence FENLWPVLMALPDF. A substrate binding region spans residues 175-195; it reads CFHWLATQPTRIANFKVLLTD. S-adenosyl-L-methionine-binding positions include 227 to 228, aspartate 252, 275 to 276, and arginine 291; these read GG and NF.

The protein belongs to the class I-like SAM-binding methyltransferase superfamily. Cation-independent O-methyltransferase family.

O-methyltransferase; part of the gene cluster 23 that mediates the biosynthesis of a family of 2-pyridones known as leporins. The hybrid PKS-NRPS synthetase lepA and the enoyl reductase lepG are responsible for fusion of phenylalanine with a hexaketide and subsequent release of the stable tetramic acid precursor, pre-leporin C. Because lepA lacks a designated enoylreductase (ER) domain, the required activity is provided the enoyl reductase lepG. It is possible that the dehydrogenase lepF also participates in production of pre-leporin C. Cytochrome P450 monooxygenase lepH is then required for the ring expansion step to yield leporin C. Leporin C is then presumably further oxidized by the N-hydroxylase lepD to form leporin B. LepI may possess a function in biosynthesis upstream of lepA. Leporin B is further oxidized in the presence of ferric ion to give the leporin B trimer-iron chelate, but whether or not this reaction is catalyzed by an enzyme in the pathway or by ferric ion is not determined yet. This is O-methyltransferase lepI from Aspergillus flavus (strain ATCC 200026 / FGSC A1120 / IAM 13836 / NRRL 3357 / JCM 12722 / SRRC 167).